The chain runs to 143 residues: MSTFFAKANAVERKWYVIDAAGLPLGRLATEAARILRGKHKPTFTPNVDTGDHVIIINAEKVVLTGNKLDQKMYRRHSGYPGGLKETPYRKLMQNMPERAVEHAVKGMLPHNKLGAQMYTKLKVYRDENHPHQAQQPEAWTIQ.

The protein belongs to the universal ribosomal protein uL13 family. In terms of assembly, part of the 50S ribosomal subunit.

Functionally, this protein is one of the early assembly proteins of the 50S ribosomal subunit, although it is not seen to bind rRNA by itself. It is important during the early stages of 50S assembly. This chain is Large ribosomal subunit protein uL13, found in Desulfitobacterium hafniense (strain Y51).